The following is a 124-amino-acid chain: Putative iron-sulfur cluster insertion protein ErpA (124 aa).

The iron-sulfur cluster site is built by Cys-49, Cys-113, and Cys-115.

Belongs to the HesB/IscA family. Homodimer. The cofactor is iron-sulfur cluster.

In terms of biological role, required for insertion of 4Fe-4S clusters. The chain is Putative iron-sulfur cluster insertion protein ErpA from Acidovorax sp. (strain JS42).